The following is a 610-amino-acid chain: Elongation factor 4 (610 aa).

The region spanning 13-195 (SHIRNFSIVA…AIVHKLPAPK (183 aa)) is the tr-type G domain. Residues 25 to 30 (DHGKST) and 142 to 145 (NKID) each bind GTP.

It belongs to the TRAFAC class translation factor GTPase superfamily. Classic translation factor GTPase family. LepA subfamily.

It is found in the cell inner membrane. The catalysed reaction is GTP + H2O = GDP + phosphate + H(+). Functionally, required for accurate and efficient protein synthesis under certain stress conditions. May act as a fidelity factor of the translation reaction, by catalyzing a one-codon backward translocation of tRNAs on improperly translocated ribosomes. Back-translocation proceeds from a post-translocation (POST) complex to a pre-translocation (PRE) complex, thus giving elongation factor G a second chance to translocate the tRNAs correctly. Binds to ribosomes in a GTP-dependent manner. The protein is Elongation factor 4 of Rhizobium johnstonii (strain DSM 114642 / LMG 32736 / 3841) (Rhizobium leguminosarum bv. viciae).